The primary structure comprises 244 residues: 1-(5-phosphoribosyl)-5-[(5-phosphoribosylamino)methylideneamino] imidazole-4-carboxamide isomerase (244 aa).

D8 (proton acceptor) is an active-site residue. The Proton donor role is filled by D129.

The protein belongs to the HisA/HisF family.

It localises to the cytoplasm. It catalyses the reaction 1-(5-phospho-beta-D-ribosyl)-5-[(5-phospho-beta-D-ribosylamino)methylideneamino]imidazole-4-carboxamide = 5-[(5-phospho-1-deoxy-D-ribulos-1-ylimino)methylamino]-1-(5-phospho-beta-D-ribosyl)imidazole-4-carboxamide. It participates in amino-acid biosynthesis; L-histidine biosynthesis; L-histidine from 5-phospho-alpha-D-ribose 1-diphosphate: step 4/9. This Geobacter sulfurreducens (strain ATCC 51573 / DSM 12127 / PCA) protein is 1-(5-phosphoribosyl)-5-[(5-phosphoribosylamino)methylideneamino] imidazole-4-carboxamide isomerase.